A 368-amino-acid polypeptide reads, in one-letter code: MITLEVDLGERSYPIHIGTGLLDNAELLRPHVRGQHAVIVTNETVGPLYAARVEAALAALGKTVRTVTLPDGEAFKHWETLNRIFDALLQAGADRKTTLVALGGGVVGDMTGFAAACYMRGVPFIQMPTTLLAQVDSSVGGKTGINHPLGKNMIGAFHQPNAVIADIDTLRTLPARELAAGMAEVIKHGAIADAEYFGWIERNIKPLNACDPDLMALAVQRSCEIKAGVVAQDEREGGLRAILNFGHTFGHAIEAGMGYGAWLHGEAVGCGMVMAADLSHRLGFIDTETRARIRELTQAANLPVVAPELGADRYIELMKVDKKAEAGSIKFILLKQLGEAFITTVPDADLRATLAHAVLKPPTEAPVA.

Residues 71–76 (DGEAFK), 105–109 (GVVGD), 129–130 (TT), Lys142, Lys151, and 169–172 (TLRT) each bind NAD(+). Residues Glu184, His247, and His264 each contribute to the Zn(2+) site.

Belongs to the sugar phosphate cyclases superfamily. Dehydroquinate synthase family. Co(2+) serves as cofactor. Zn(2+) is required as a cofactor. Requires NAD(+) as cofactor.

The protein resides in the cytoplasm. It carries out the reaction 7-phospho-2-dehydro-3-deoxy-D-arabino-heptonate = 3-dehydroquinate + phosphate. The protein operates within metabolic intermediate biosynthesis; chorismate biosynthesis; chorismate from D-erythrose 4-phosphate and phosphoenolpyruvate: step 2/7. Its function is as follows. Catalyzes the conversion of 3-deoxy-D-arabino-heptulosonate 7-phosphate (DAHP) to dehydroquinate (DHQ). The polypeptide is 3-dehydroquinate synthase (Cupriavidus necator (strain ATCC 17699 / DSM 428 / KCTC 22496 / NCIMB 10442 / H16 / Stanier 337) (Ralstonia eutropha)).